Here is a 225-residue protein sequence, read N- to C-terminus: PKHD-type hydroxylase YbiX (225 aa).

In terms of domain architecture, Fe2OG dioxygenase spans 78–177 (TLSTPLFNRY…RVASFMWIQS (100 aa)). Fe cation is bound by residues His96, Asp98, and His158. 2-oxoglutarate is bound at residue Arg168.

The cofactor is Fe(2+). It depends on L-ascorbate as a cofactor.

The protein is PKHD-type hydroxylase YbiX of Escherichia coli (strain K12 / DH10B).